A 156-amino-acid polypeptide reads, in one-letter code: Small ribosomal subunit protein uS7 (156 aa).

It belongs to the universal ribosomal protein uS7 family. In terms of assembly, part of the 30S ribosomal subunit. Contacts proteins S9 and S11.

Its function is as follows. One of the primary rRNA binding proteins, it binds directly to 16S rRNA where it nucleates assembly of the head domain of the 30S subunit. Is located at the subunit interface close to the decoding center, probably blocks exit of the E-site tRNA. This is Small ribosomal subunit protein uS7 from Heliobacterium modesticaldum (strain ATCC 51547 / Ice1).